We begin with the raw amino-acid sequence, 280 residues long: Putative pyruvate, phosphate dikinase regulatory protein (280 aa).

154-161 (GVSRTSKT) is a binding site for ADP.

It belongs to the pyruvate, phosphate/water dikinase regulatory protein family. PDRP subfamily.

It carries out the reaction N(tele)-phospho-L-histidyl/L-threonyl-[pyruvate, phosphate dikinase] + ADP = N(tele)-phospho-L-histidyl/O-phospho-L-threonyl-[pyruvate, phosphate dikinase] + AMP + H(+). The enzyme catalyses N(tele)-phospho-L-histidyl/O-phospho-L-threonyl-[pyruvate, phosphate dikinase] + phosphate + H(+) = N(tele)-phospho-L-histidyl/L-threonyl-[pyruvate, phosphate dikinase] + diphosphate. In terms of biological role, bifunctional serine/threonine kinase and phosphorylase involved in the regulation of the pyruvate, phosphate dikinase (PPDK) by catalyzing its phosphorylation/dephosphorylation. The chain is Putative pyruvate, phosphate dikinase regulatory protein from Nitrobacter hamburgensis (strain DSM 10229 / NCIMB 13809 / X14).